The following is a 162-amino-acid chain: Beta-lactoglobulin-3 (162 aa).

Intrachain disulfides connect cysteine 66–cysteine 160 and cysteine 106–cysteine 119.

Belongs to the calycin superfamily. Lipocalin family. In terms of assembly, monomer.

The protein resides in the secreted. Functionally, lactoglobulin is the primary component of whey, it binds retinol and is probably involved in the transport of that molecule. In Felis catus (Cat), this protein is Beta-lactoglobulin-3 (LGB3).